Reading from the N-terminus, the 229-residue chain is Uracil-DNA glycosylase (229 aa).

Residue aspartate 64 is the Proton acceptor of the active site.

Belongs to the uracil-DNA glycosylase (UDG) superfamily. UNG family.

Its subcellular location is the cytoplasm. It catalyses the reaction Hydrolyzes single-stranded DNA or mismatched double-stranded DNA and polynucleotides, releasing free uracil.. Excises uracil residues from the DNA which can arise as a result of misincorporation of dUMP residues by DNA polymerase or due to deamination of cytosine. The polypeptide is Uracil-DNA glycosylase (Escherichia fergusonii (strain ATCC 35469 / DSM 13698 / CCUG 18766 / IAM 14443 / JCM 21226 / LMG 7866 / NBRC 102419 / NCTC 12128 / CDC 0568-73)).